The following is a 463-amino-acid chain: Myocyte-specific enhancer factor 2C (463 aa).

Residues 3–57 (RKKIQITRIMDERNRQVTFTKRKFGLMKKAYELSVLCDCEIALIIFNSTNKLFQY) enclose the MADS-box domain. The residue at position 4 (Lys-4) is an N6-acetyllysine. The mef2-type DNA-binding region spans 58-86 (ASTDMDKVLLKYTEYNEPHESRTNSDIVE). At Ser-59 the chain carries Phosphoserine; by CK2. Phosphoserine is present on residues Ser-98 and Ser-104. N6-acetyllysine occurs at positions 114 and 117. The tract at residues 178-223 (NSMSPGVTHRPPSAGNTGGLMGGDLTSGAGTSAGNGYGNPRNSPGL) is disordered. Phosphoserine is present on residues Ser-220 and Ser-226. Lys-232 and Lys-237 each carry N6-acetyllysine. A Phosphoserine modification is found at Ser-238. N6-acetyllysine is present on residues Lys-250 and Lys-262. 2 positions are modified to phosphothreonine; by MAPK7 and MAPK14: Thr-283 and Thr-290. Residues 358-389 (ACTSTHLSQSSNLSLPSTQSLNIKSEPVSPPR) are transcription repressor. Over residues 365–380 (SQSSNLSLPSTQSLNI) the composition is skewed to polar residues. The disordered stretch occupies residues 365 to 463 (SQSSNLSLPS…RMRLSEGWAT (99 aa)). Lys-381 participates in a covalent cross-link: Glycyl lysine isopeptide (Lys-Gly) (interchain with G-Cter in SUMO). Ser-386 carries the phosphoserine; by CDK5 modification. A Phosphoserine; by MAPK7 modification is found at Ser-409. Residues 409–422 (SPVDSLSSCSSSYD) are compositionally biased toward low complexity. Basic and acidic residues predominate over residues 423–433 (GSDREDHRNEF). Ser-435 is subject to Phosphoserine.

In terms of assembly, forms a complex with class II HDACs in undifferentiating cells. On myogenic differentiation, HDACs are released into the cytoplasm allowing MEF2s to interact with other proteins for activation. Interacts with EP300 in differentiating cells; the interaction acetylates MEF2C leading to increased DNA binding and activation. Interacts with HDAC7 and CARM1. Interacts with HDAC4, HDAC7 and HDAC9; the interaction with HDACs represses transcriptional activity. Interacts with LPIN1. Interacts with MYOCD. Interacts with AKAP13. Interacts with FOXK1; the interaction inhibits MEF2C transactivation activity. Interacts (via N-terminus) with HABP4; this interaction decreases DNA-binding activity of MEF2C in myocardial cells in response to mechanical stress. Interacts with JPH2; interaction specifically takes place with the Junctophilin-2 N-terminal fragment cleavage product of JPH2. Interacts (via MADS box) with SOX18. Interacts with PHF7; the interaction promotes MEF2C binding to its transcription targets. Post-translationally, phosphorylated on Ser-59; which enhances DNA binding activity. Phosphorylated on Ser-386; which is required for Lys-381 sumoylation and inhibits transcriptional activity. Acetylated by p300 on several sites in diffentiating myocytes. Acetylation on Lys-4 increases DNA binding and transactivation. In terms of processing, sumoylated on Lys-381 with SUMO2 but not SUMO1; which represses transcriptional activity. Post-translationally, proteolytically cleaved in cerebellar granule neurons on several sites by caspase 3 and caspase 7 following neurotoxicity. Preferentially cleaves the CDK5-mediated hyperphosphorylated form which leads to neuron apoptosis and transcriptional inactivation.

It localises to the nucleus. Its subcellular location is the cytoplasm. The protein localises to the sarcoplasm. In terms of biological role, transcription activator which binds specifically to the MEF2 element present in the regulatory regions of many muscle-specific genes. Controls cardiac morphogenesis and myogenesis, and is also involved in vascular development. Enhances transcriptional activation mediated by SOX18. Plays an essential role in hippocampal-dependent learning and memory by suppressing the number of excitatory synapses and thus regulating basal and evoked synaptic transmission. Crucial for normal neuronal development, distribution, and electrical activity in the neocortex. Necessary for proper development of megakaryocytes and platelets and for bone marrow B-lymphopoiesis. Required for B-cell survival and proliferation in response to BCR stimulation, efficient IgG1 antibody responses to T-cell-dependent antigens and for normal induction of germinal center B-cells. May also be involved in neurogenesis and in the development of cortical architecture. The polypeptide is Myocyte-specific enhancer factor 2C (Sus scrofa (Pig)).